The primary structure comprises 838 residues: V-type proton ATPase 116 kDa subunit a 1 (838 aa).

The Cytoplasmic portion of the chain corresponds to 1 to 388 (MGELFRSEEM…DAYGIGTYRE (388 aa)). Thr-250 and Thr-360 each carry phosphothreonine. At Tyr-364 the chain carries Phosphotyrosine. Residues 389–407 (INPAPYTIITFPFLFAVMF) traverse the membrane as a helical segment. Over 408-409 (GD) the chain is Vacuolar. Residues 410–426 (LGHGILMTLFAVWMVLK) traverse the membrane as a helical segment. Residues 427–441 (ESRILSQKNENEMFS) lie on the Cytoplasmic side of the membrane. A helical membrane pass occupies residues 442–471 (TIFSGRYIILLMGVFSIYTGLIYNDCFSKS). Over 472-535 (LNIFGSSWSV…ATNKLTFLNS (64 aa)) the chain is Vacuolar. A helical transmembrane segment spans residues 536–555 (FKMKMSVILGIIHMLFGVSL). The Cytoplasmic segment spans residues 556 to 573 (SLFNHTYFKKPLNIYFGF). A helical transmembrane segment spans residues 574-594 (IPEIIFMTSLFGYLVILIFYK). Topologically, residues 595–639 (WTAYNAKTSEKAPSLLIHFINMFLFSYGDSGNSMLYSGQKGIQCF) are vacuolar. The chain crosses the membrane as a helical span at residues 640-659 (LVVVALLCVPWMLLFKPLVL). Topologically, residues 660-725 (RRQYLRRKHL…DTMVHQAIHT (66 aa)) are cytoplasmic. A helical transmembrane segment spans residues 726–750 (IEYCLGCISNTASYLRLWALSLAHA). At 751-771 (QLSEVLWTMVIHIGLKVKSLA) the chain is on the vacuolar side. A helical membrane pass occupies residues 772 to 810 (GGLALFFIFAAFATLTVAILLIMEGLSAFLHALRLHWVE). Topologically, residues 811-838 (FQNKFYSGTGFKFLPFSFEHIREGKFDD) are cytoplasmic.

Belongs to the V-ATPase 116 kDa subunit family. In terms of assembly, V-ATPase is a heteromultimeric enzyme made up of two complexes: the ATP-hydrolytic V1 complex and the proton translocation V0 complex. The V1 complex consists of three catalytic AB heterodimers that form a heterohexamer, three peripheral stalks each consisting of EG heterodimers, one central rotor including subunits D and F, and the regulatory subunits C and H. The proton translocation complex V0 consists of the proton transport subunit a, a ring of proteolipid subunits c9c'', rotary subunit d, subunits e and f, and the accessory subunits ATP6AP1/Ac45 and ATP6AP2/PRR. Interacts with SPAAR. As to expression, expressed in brain (at protein level). Expressed heart, kidney, liver, spleen, and to a lesser extent in brain.

The protein localises to the cytoplasmic vesicle. Its subcellular location is the clathrin-coated vesicle membrane. It is found in the secretory vesicle. It localises to the synaptic vesicle membrane. The protein resides in the melanosome. In terms of biological role, subunit of the V0 complex of vacuolar(H+)-ATPase (V-ATPase), a multisubunit enzyme composed of a peripheral complex (V1) that hydrolyzes ATP and a membrane integral complex (V0) that translocates protons. V-ATPase is responsible for the acidification of various organelles, such as lysosomes, endosomes, the trans-Golgi network, and secretory granules, including synaptic vesicles. In certain cell types, can be exported to the plasma membrane, where it is involved in the acidification of the extracellular environment. Required for assembly and activity of the vacuolar ATPase. Through its action on compartment acidification, plays an essential role in neuronal development in terms of integrity and connectivity of neurons. The sequence is that of V-type proton ATPase 116 kDa subunit a 1 (ATP6V0A1) from Bos taurus (Bovine).